Reading from the N-terminus, the 1370-residue chain is DNA-directed RNA polymerase subunit beta (1370 aa).

The protein belongs to the RNA polymerase beta chain family. As to quaternary structure, the RNAP catalytic core consists of 2 alpha, 1 beta, 1 beta' and 1 omega subunit. When a sigma factor is associated with the core the holoenzyme is formed, which can initiate transcription.

It carries out the reaction RNA(n) + a ribonucleoside 5'-triphosphate = RNA(n+1) + diphosphate. In terms of biological role, DNA-dependent RNA polymerase catalyzes the transcription of DNA into RNA using the four ribonucleoside triphosphates as substrates. This chain is DNA-directed RNA polymerase subunit beta, found in Bordetella bronchiseptica (strain ATCC BAA-588 / NCTC 13252 / RB50) (Alcaligenes bronchisepticus).